The chain runs to 702 residues: MGRRKIEIKAIKDDRNRSVTFLKRKGGLFKKAHELSVLCSVDVAVFIFGTNKKLYEYSSGDMRELITRYTYHGGATEHKGPSDFNGGDDDDEEEGDGTPPLDQPMDAHMMPPHFQGQGPFPPHVMRHYTPSASPPIPNGVPFPPHGHGVPRGHTPQPQMLSRPGSRNDARRMGQPMGPQGSPQVNGFGFGQQQSMYGPPNTTMPPHMPPQMAPGPPFPYPQHPQHPPHPPHPPHPPHPQQPHQPQMQQQFIEDGRRATMPANFAPHPPPPHGPMGMQRHSVSPPQQHPHHVPQLPPQQPQQHPHSSPPQPQHHQMQSPPQPMVKFESPQQIEPPQHQHQQQPEPQEPRPEQQQQQQQSQQSQQPQEPQSEPARSLPPPPPPLEVKTELAPPAQPGRIPQPSLLDTAVKKLPRQKQHSIFTPIDENRSILSQNLAAFHAEPSKNKSSPPAHHRSSSVDESTSNASEASRGKDKDIASSPPLLKRADPRASISSVSSAPESAPAPPSRSNSLRAGPPRPRLKVQIPDEQSEDGSGSATAESASSAQGGASTDATSQSTRQNDSHSSTNMVLPPPSPSASALLSAGATGPPNPFAPKRPPQHPAPGLNIDTPVSALPSRFLNNEFLPSPSSFYPDWNFRGGDNNTLPSPLNFATPVVGTGPSFLRDENPGASLKRKSPDNLSIHGPISDNPLEAGNEPKRVKVDS.

An MADS-box domain is found at 1–61; sequence MGRRKIEIKA…KKLYEYSSGD (61 aa). Disordered stretches follow at residues 73–608 and 658–702; these read GGAT…NIDT and PSFL…KVDS. Residues 86-96 are compositionally biased toward acidic residues; it reads GGDDDDEEEGD. A compositionally biased stretch (pro residues) spans 132 to 144; sequence ASPPIPNGVPFPP. Low complexity predominate over residues 145–155; it reads HGHGVPRGHTP. Polar residues predominate over residues 180-195; it reads GSPQVNGFGFGQQQSM. Residues 201 to 241 are compositionally biased toward pro residues; that stretch reads TTMPPHMPPQMAPGPPFPYPQHPQHPPHPPHPPHPPHPQQP. Composition is skewed to low complexity over residues 273 to 284, 326 to 343, and 350 to 371; these read PMGMQRHSVSPP, ESPQ…QQPE, and EQQQ…QSEP. Residues 456–465 show a composition bias toward polar residues; the sequence is VDESTSNASE. 2 stretches are compositionally biased toward low complexity: residues 487 to 512 and 530 to 553; these read RASI…SLRA and DGSG…DATS. The span at 554–567 shows a compositional bias: polar residues; sequence QSTRQNDSHSSTNM. The segment covering 587 to 600 has biased composition (pro residues); that stretch reads PPNPFAPKRPPQHP. Residues 693–702 are compositionally biased toward basic and acidic residues; it reads NEPKRVKVDS.

Belongs to the MEF2 family. In terms of assembly, interacts with MAPK MPS1.

It localises to the nucleus. Its function is as follows. Transcription factor acting downstream of the MPS1 MAP kinase (MAPK) cascade during conidiation and plant infection. Required for overcoming plant defense responses and the differentiation of secondary infectious hyphae in live plant cells. The sequence is that of MADS-box MEF2 type transcription factor MIG1 from Pyricularia oryzae (strain 70-15 / ATCC MYA-4617 / FGSC 8958) (Rice blast fungus).